The sequence spans 218 residues: Protein-L-isoaspartate O-methyltransferase 1 (218 aa).

The active site involves serine 69.

This sequence belongs to the methyltransferase superfamily. L-isoaspartyl/D-aspartyl protein methyltransferase family.

The protein localises to the cytoplasm. The enzyme catalyses [protein]-L-isoaspartate + S-adenosyl-L-methionine = [protein]-L-isoaspartate alpha-methyl ester + S-adenosyl-L-homocysteine. Its function is as follows. Catalyzes the methyl esterification of L-isoaspartyl residues in peptides and proteins that result from spontaneous decomposition of normal L-aspartyl and L-asparaginyl residues. It plays a role in the repair and/or degradation of damaged proteins. The protein is Protein-L-isoaspartate O-methyltransferase 1 of Marinobacter nauticus (strain ATCC 700491 / DSM 11845 / VT8) (Marinobacter aquaeolei).